Reading from the N-terminus, the 111-residue chain is DNA-binding protein MTH_1615 (111 aa).

Belongs to the PDCD5 family.

Its function is as follows. DNA-binding protein which can interact with a randomly chosen 20-mer of double-stranded DNA. This is DNA-binding protein MTH_1615 from Methanothermobacter thermautotrophicus (strain ATCC 29096 / DSM 1053 / JCM 10044 / NBRC 100330 / Delta H) (Methanobacterium thermoautotrophicum).